Here is a 457-residue protein sequence, read N- to C-terminus: tRNA-2-methylthio-N(6)-dimethylallyladenosine synthase (457 aa).

Positions 18 to 133 (KKLFIETYGC…LPELIASVEA (116 aa)) constitute an MTTase N-terminal domain. Residues cysteine 27, cysteine 63, cysteine 97, cysteine 171, cysteine 175, and cysteine 178 each contribute to the [4Fe-4S] cluster site. One can recognise a Radical SAM core domain in the interval 157-390 (CGNHISGFVS…IALQNRLSAE (234 aa)). Positions 393–456 (NRCIGKTYEV…SATLKGEEVF (64 aa)) constitute a TRAM domain.

This sequence belongs to the methylthiotransferase family. MiaB subfamily. Monomer. [4Fe-4S] cluster is required as a cofactor.

Its subcellular location is the cytoplasm. It catalyses the reaction N(6)-dimethylallyladenosine(37) in tRNA + (sulfur carrier)-SH + AH2 + 2 S-adenosyl-L-methionine = 2-methylsulfanyl-N(6)-dimethylallyladenosine(37) in tRNA + (sulfur carrier)-H + 5'-deoxyadenosine + L-methionine + A + S-adenosyl-L-homocysteine + 2 H(+). Catalyzes the methylthiolation of N6-(dimethylallyl)adenosine (i(6)A), leading to the formation of 2-methylthio-N6-(dimethylallyl)adenosine (ms(2)i(6)A) at position 37 in tRNAs that read codons beginning with uridine. This is tRNA-2-methylthio-N(6)-dimethylallyladenosine synthase from Bacteroides fragilis (strain ATCC 25285 / DSM 2151 / CCUG 4856 / JCM 11019 / LMG 10263 / NCTC 9343 / Onslow / VPI 2553 / EN-2).